We begin with the raw amino-acid sequence, 269 residues long: Putative biopolymer transport protein ExbD (269 aa).

Residues 1–40 (MASSPKAPKSHRKFQSIYHPTRPLSLWQDNQHDQGEVRIE) are Cytoplasmic-facing. A helical membrane pass occupies residues 41–61 (IIPLIDVVFCILTFFILGAVG). Residues 62 to 269 (LSRQQAISLD…GNTVPSAPQQ (208 aa)) lie on the Periplasmic side of the membrane. Residues 190 to 269 (NGANPGMSNF…GNTVPSAPQQ (80 aa)) form a disordered region. Over residues 193 to 204 (NPGMSNFNNSNP) the composition is skewed to low complexity.

It belongs to the ExbD/TolR family.

The protein resides in the cell inner membrane. This is Putative biopolymer transport protein ExbD from Synechocystis sp. (strain ATCC 27184 / PCC 6803 / Kazusa).